Here is a 310-residue protein sequence, read N- to C-terminus: D-alanine--D-alanine ligase (310 aa).

Residues Lys107–Ala305 form the ATP-grasp domain. Glu134–Thr189 provides a ligand contact to ATP. Positions 259, 272, and 274 each coordinate Mg(2+).

This sequence belongs to the D-alanine--D-alanine ligase family. It depends on Mg(2+) as a cofactor. Requires Mn(2+) as cofactor.

It localises to the cytoplasm. It catalyses the reaction 2 D-alanine + ATP = D-alanyl-D-alanine + ADP + phosphate + H(+). It functions in the pathway cell wall biogenesis; peptidoglycan biosynthesis. Its function is as follows. Cell wall formation. This Dichelobacter nodosus (strain VCS1703A) protein is D-alanine--D-alanine ligase.